A 102-amino-acid polypeptide reads, in one-letter code: Protein PDF (102 aa).

Positions 1–24 are cleaved as a signal peptide; it reads MARYTYLVALVLLAICCQWGYCGA. An Alanine amide modification is found at Ala100.

This sequence belongs to the arthropod PDH family. In terms of tissue distribution, predominantly expressed in adult head. Expressed at higher level in males than in females. In adult brain, it is specifically expressed in the ventral lateral neurons (LNvs) as well as in 2-4 tritocerebral cells and 4-6 abdominal cells.

It is found in the secreted. Functionally, neuropeptide PDF is the main transmitter regulating circadian locomotor rhythms. Required to maintain behavioral rhythms under constant conditions by coordinating pacemaker interactions in the circadian system. Together with CCHa1, involved in regulating intensity and periodicity of daytime activity, possibly by modulating rhythmic expression of circadian protein PER/period in a subset of clock neurons, but not TIM/timeless. Acts on small and large ventral lateral neurons to control sleep and regulates the state transition from sleep to wake. In Drosophila melanogaster (Fruit fly), this protein is Protein PDF (Pdf).